The chain runs to 63 residues: Large ribosomal subunit protein bL28 (63 aa).

This sequence belongs to the bacterial ribosomal protein bL28 family.

This Geobacter metallireducens (strain ATCC 53774 / DSM 7210 / GS-15) protein is Large ribosomal subunit protein bL28.